Here is a 108-residue protein sequence, read N- to C-terminus: Parvalbumin beta 2 (108 aa).

S2 is modified (N-acetylserine). 2 consecutive EF-hand domains span residues 38 to 73 and 77 to 108; these read KSSD…FSAS and LTDA…MIKG. D51, D53, S55, F57, E59, E62, D90, D92, D94, M96, and E101 together coordinate Ca(2+).

This sequence belongs to the parvalbumin family.

In muscle, parvalbumin is thought to be involved in relaxation after contraction. It binds two calcium ions. The protein is Parvalbumin beta 2 of Salmo salar (Atlantic salmon).